Here is a 571-residue protein sequence, read N- to C-terminus: Kinesin light chain (571 aa).

The stretch at 54–160 (LLTSMKTIRK…KKHLEFMNEM (107 aa)) forms a coiled coil. Residues 167 to 177 (EAQVNEEKESE) show a composition bias toward basic and acidic residues. Residues 167-210 (EAQVNEEKESEQSSLDLGFPDDDDDGGQPEVLSPTQPSAMAQAA) are disordered. 6 TPR repeats span residues 220-253 (LRTL…LEKT), 262-295 (ATML…REKT), 304-337 (AATL…REKV), 346-379 (AKQL…YQKE), 388-421 (AKTK…AHEK), and 471-504 (TTTL…RKSA). The interval 518–571 (GSDFSKGQSPKDRKRSNSRDRNRRDSMDSVSYEKSGDGDEHEKSKLHVGTSHKQ) is disordered. 2 stretches are compositionally biased toward basic and acidic residues: residues 526 to 544 (SPKD…RDSM) and 551 to 562 (KSGDGDEHEKSK).

The protein belongs to the kinesin light chain family. As to quaternary structure, oligomeric complex composed of two heavy chains and two light chains.

It is found in the cytoplasm. The protein localises to the cytoskeleton. In terms of biological role, kinesin is a microtubule-associated force-producing protein that may play a role in organelle transport. The light chain may function in coupling of cargo to the heavy chain or in the modulation of its ATPase activity. The polypeptide is Kinesin light chain (Doryteuthis pealeii (Longfin inshore squid)).